Here is a 379-residue protein sequence, read N- to C-terminus: Chaperone protein DnaJ (379 aa).

Residues 5 to 69 (EYYERLGVDK…QKRAAYDQYG (65 aa)) enclose the J domain. A CR-type zinc finger spans residues 141 to 223 (GVEKQVKYNR…CHGSGHEKVA (83 aa)). Positions 154, 157, 171, 174, 197, 200, 211, and 214 each coordinate Zn(2+). CXXCXGXG motif repeat units follow at residues 154-161 (CHTCGGSG), 171-178 (CHKCGGRG), 197-204 (CDVCNGTG), and 211-218 (CETCHGSG).

The protein belongs to the DnaJ family. As to quaternary structure, homodimer. Zn(2+) is required as a cofactor.

The protein resides in the cytoplasm. Participates actively in the response to hyperosmotic and heat shock by preventing the aggregation of stress-denatured proteins and by disaggregating proteins, also in an autonomous, DnaK-independent fashion. Unfolded proteins bind initially to DnaJ; upon interaction with the DnaJ-bound protein, DnaK hydrolyzes its bound ATP, resulting in the formation of a stable complex. GrpE releases ADP from DnaK; ATP binding to DnaK triggers the release of the substrate protein, thus completing the reaction cycle. Several rounds of ATP-dependent interactions between DnaJ, DnaK and GrpE are required for fully efficient folding. Also involved, together with DnaK and GrpE, in the DNA replication of plasmids through activation of initiation proteins. This Lactococcus lactis subsp. lactis (strain IL1403) (Streptococcus lactis) protein is Chaperone protein DnaJ.